The chain runs to 132 residues: Gamma-crystallin-5 (132 aa).

A Beta/gamma crystallin 'Greek key' 2 domain is found at 1 to 40 (ILYEQPSYRGHQYYLWKGEYPDFQRWMGFNDSIRSCRMSP). Residues 41–45 (YHQGQ) are connecting peptide. Beta/gamma crystallin 'Greek key' domains lie at 46–86 (YKMR…NVFD) and 87–129 (GNWM…RRVH).

Belongs to the beta/gamma-crystallin family. As to quaternary structure, monomer.

Crystallins are the dominant structural components of the vertebrate eye lens. This chain is Gamma-crystallin-5 (cryg5), found in Xenopus laevis (African clawed frog).